An 82-amino-acid chain; its full sequence is UPF0180 protein BT9727_1277 (82 aa).

This sequence belongs to the UPF0180 family.

This chain is UPF0180 protein BT9727_1277, found in Bacillus thuringiensis subsp. konkukian (strain 97-27).